The following is an 871-amino-acid chain: DNA mismatch repair protein MutS (871 aa).

616-623 contacts ATP; that stretch reads GPNMAGKS. Positions 801–825 are disordered; that stretch reads ETEKTEESMEGTNLPKKKKEEKTSS.

Belongs to the DNA mismatch repair MutS family.

Its function is as follows. This protein is involved in the repair of mismatches in DNA. It is possible that it carries out the mismatch recognition step. This protein has a weak ATPase activity. The sequence is that of DNA mismatch repair protein MutS from Clostridium kluyveri (strain NBRC 12016).